The chain runs to 132 residues: Large ribosomal subunit protein bL17 (132 aa).

It belongs to the bacterial ribosomal protein bL17 family. As to quaternary structure, part of the 50S ribosomal subunit. Contacts protein L32.

The chain is Large ribosomal subunit protein bL17 from Polaromonas sp. (strain JS666 / ATCC BAA-500).